Here is a 226-residue protein sequence, read N- to C-terminus: Cytidylate kinase (226 aa).

Residue 14–22 participates in ATP binding; that stretch reads GPAGAGKST.

Belongs to the cytidylate kinase family. Type 1 subfamily.

It is found in the cytoplasm. The enzyme catalyses CMP + ATP = CDP + ADP. It carries out the reaction dCMP + ATP = dCDP + ADP. In Symbiobacterium thermophilum (strain DSM 24528 / JCM 14929 / IAM 14863 / T), this protein is Cytidylate kinase.